Here is a 359-residue protein sequence, read N- to C-terminus: UbiA prenyltransferase domain-containing protein 1 homolog (359 aa).

Over residues 1–16 the composition is skewed to polar residues; it reads MATSSQLLPNGNLSRN. The tract at residues 1–23 is disordered; it reads MATSSQLLPNGNLSRNGKTKTED. Helical transmembrane passes span 67–89, 98–118, 148–168, 177–197, 200–220, 262–284, 289–311, and 335–355; these read ALRPWSLSASLVPTLLGSALAYR, LATFFLTAFTVVTVHCAGNVV, VVSLGAILYMAGCGGFVLLAV, LALIYFGGLSSSFLYTGGIGF, IALGDLVILILFGPISVLFAF, IVTLAILIGRTASHVLYAMLLFA, FFIFGLKYSLWFLLPLVTLPQAF, and FFFGILYVVACCCAHQLPTFG.

It belongs to the UbiA prenyltransferase family.

It localises to the mitochondrion membrane. It participates in quinol/quinone metabolism; menaquinone biosynthesis. Its function is as follows. Prenyltransferase that mediates the formation of menaquinone-4 (MK-4), a vitamin K2 isoform, thereby acting as a mitochondrial electron carrier. Mediates the conversion of phylloquinone (PK) into MK-4, probably by cleaving the side chain of phylloquinone (PK) to release 2-methyl-1,4-naphthoquinone (menadione; K3) and then prenylating it with geranylgeranyl pyrophosphate (GGPP) to form MK-4. MK-4 acts as a membrane electron carrier downstream of a electron transport chain complex, improving mitochondrial oxygen consumption. The polypeptide is UbiA prenyltransferase domain-containing protein 1 homolog (heix) (Drosophila melanogaster (Fruit fly)).